The primary structure comprises 433 residues: Xylose isomerase (433 aa).

Residues His-99 and Asp-102 contribute to the active site. Mg(2+) is bound by residues Glu-230, Glu-266, His-269, Asp-294, Asp-305, Asp-307, and Asp-337.

It belongs to the xylose isomerase family. In terms of assembly, homotetramer. Mg(2+) is required as a cofactor.

It localises to the cytoplasm. The enzyme catalyses alpha-D-xylose = alpha-D-xylulofuranose. This chain is Xylose isomerase, found in Cereibacter sphaeroides (strain ATCC 17023 / DSM 158 / JCM 6121 / CCUG 31486 / LMG 2827 / NBRC 12203 / NCIMB 8253 / ATH 2.4.1.) (Rhodobacter sphaeroides).